We begin with the raw amino-acid sequence, 267 residues long: tRNA pseudouridine synthase A (267 aa).

Catalysis depends on D52, which acts as the Nucleophile. Substrate is bound at residue Y113.

This sequence belongs to the tRNA pseudouridine synthase TruA family. In terms of assembly, homodimer.

The catalysed reaction is uridine(38/39/40) in tRNA = pseudouridine(38/39/40) in tRNA. In terms of biological role, formation of pseudouridine at positions 38, 39 and 40 in the anticodon stem and loop of transfer RNAs. In Chlamydia pneumoniae (Chlamydophila pneumoniae), this protein is tRNA pseudouridine synthase A.